The chain runs to 163 residues: NADH-quinone oxidoreductase subunit I (163 aa).

4Fe-4S ferredoxin-type domains are found at residues 55-84 (RRYP…IEAE) and 94-123 (TRYD…EGPN). Positions 64, 67, 70, 74, 103, 106, 109, and 113 each coordinate [4Fe-4S] cluster.

Belongs to the complex I 23 kDa subunit family. NDH-1 is composed of 14 different subunits. Subunits NuoA, H, J, K, L, M, N constitute the membrane sector of the complex. Requires [4Fe-4S] cluster as cofactor.

Its subcellular location is the cell inner membrane. The catalysed reaction is a quinone + NADH + 5 H(+)(in) = a quinol + NAD(+) + 4 H(+)(out). In terms of biological role, NDH-1 shuttles electrons from NADH, via FMN and iron-sulfur (Fe-S) centers, to quinones in the respiratory chain. The immediate electron acceptor for the enzyme in this species is believed to be ubiquinone. Couples the redox reaction to proton translocation (for every two electrons transferred, four hydrogen ions are translocated across the cytoplasmic membrane), and thus conserves the redox energy in a proton gradient. This chain is NADH-quinone oxidoreductase subunit I, found in Caulobacter vibrioides (strain ATCC 19089 / CIP 103742 / CB 15) (Caulobacter crescentus).